The primary structure comprises 499 residues: Sensor histidine kinase VxrA (499 aa).

At 1 to 12 (MRYSFCMLEKTN) the chain is on the cytoplasmic side. The chain crosses the membrane as a helical span at residues 13 to 31 (IPLIRALNLTLVSLCFAML). The Periplasmic portion of the chain corresponds to 32 to 257 (PNPVHADSLP…ICWDVEDHSD (226 aa)). Intrachain disulfides connect Cys-101–Cys-122 and Cys-241–Cys-249. Residues 258 to 280 (LLRTSMIILVIANIFLVLGWSGY) form a helical membrane-spanning segment. The Cytoplasmic portion of the chain corresponds to 281–499 (RWNSKRQEMR…IPCETDTASR (219 aa)). In terms of domain architecture, Histidine kinase spans 298 to 494 (ILTHELRTPI…TFILEIPCET (197 aa)). His-301 carries the phosphohistidine; by autocatalysis modification.

Homodimer. Post-translationally, autophosphorylated. Contains two disulfide bonds that may play a role in the stability of the protein. However, the disulfide bonds are not absolutely essential, as some activity and growth are detected in the absence of each disulfide bond.

The protein resides in the cell inner membrane. It catalyses the reaction ATP + protein L-histidine = ADP + protein N-phospho-L-histidine.. Functionally, member of the two-component regulatory system VxrB/VxrA involved in the regulation of diverses processes, including virulence, the type VI secretion system (T6SS) and biofilm formation. Functions as a sensor protein kinase which is autophosphorylated at a histidine residue and transfers its phosphate group to the conserved aspartic acid residue in the regulatory domain of VxrB. Is critical for colonization in the infant mouse model. Contributes to the resistance to beta-lactam treatment. The polypeptide is Sensor histidine kinase VxrA (Vibrio cholerae serotype O1 (strain ATCC 39315 / El Tor Inaba N16961)).